We begin with the raw amino-acid sequence, 208 residues long: ATP-dependent Clp protease proteolytic subunit (208 aa).

Residue serine 106 is the Nucleophile of the active site. The active site involves histidine 131.

Belongs to the peptidase S14 family. Fourteen ClpP subunits assemble into 2 heptameric rings which stack back to back to give a disk-like structure with a central cavity, resembling the structure of eukaryotic proteasomes.

The protein localises to the cytoplasm. The catalysed reaction is Hydrolysis of proteins to small peptides in the presence of ATP and magnesium. alpha-casein is the usual test substrate. In the absence of ATP, only oligopeptides shorter than five residues are hydrolyzed (such as succinyl-Leu-Tyr-|-NHMec, and Leu-Tyr-Leu-|-Tyr-Trp, in which cleavage of the -Tyr-|-Leu- and -Tyr-|-Trp bonds also occurs).. Its function is as follows. Cleaves peptides in various proteins in a process that requires ATP hydrolysis. Has a chymotrypsin-like activity. Plays a major role in the degradation of misfolded proteins. The chain is ATP-dependent Clp protease proteolytic subunit from Caulobacter sp. (strain K31).